The sequence spans 305 residues: Homoserine O-acetyltransferase (305 aa).

Cys-132 (acyl-thioester intermediate) is an active-site residue. Residues Lys-153 and Ser-181 each coordinate substrate. The active-site Proton acceptor is the His-221. The active site involves Glu-223. Residue Arg-235 coordinates substrate.

This sequence belongs to the MetA family.

It localises to the cytoplasm. It carries out the reaction L-homoserine + acetyl-CoA = O-acetyl-L-homoserine + CoA. It functions in the pathway amino-acid biosynthesis; L-methionine biosynthesis via de novo pathway; O-acetyl-L-homoserine from L-homoserine: step 1/1. Its function is as follows. Transfers an acetyl group from acetyl-CoA to L-homoserine, forming acetyl-L-homoserine. In Leuconostoc mesenteroides subsp. mesenteroides (strain ATCC 8293 / DSM 20343 / BCRC 11652 / CCM 1803 / JCM 6124 / NCDO 523 / NBRC 100496 / NCIMB 8023 / NCTC 12954 / NRRL B-1118 / 37Y), this protein is Homoserine O-acetyltransferase.